Consider the following 177-residue polypeptide: Large ribosomal subunit protein uL6 (177 aa).

This sequence belongs to the universal ribosomal protein uL6 family. In terms of assembly, part of the 50S ribosomal subunit.

Functionally, this protein binds to the 23S rRNA, and is important in its secondary structure. It is located near the subunit interface in the base of the L7/L12 stalk, and near the tRNA binding site of the peptidyltransferase center. In Rhodopseudomonas palustris (strain HaA2), this protein is Large ribosomal subunit protein uL6.